The chain runs to 112 residues: 2Fe-2S ferredoxin (112 aa).

The 2Fe-2S ferredoxin-type domain maps to 5-107 (IKVTFIINDG…GIKVRLPSAT (103 aa)). Positions 42, 48, 51, and 88 each coordinate [2Fe-2S] cluster.

This sequence belongs to the adrenodoxin/putidaredoxin family. [2Fe-2S] cluster is required as a cofactor.

Ferredoxin are iron-sulfur proteins that transfer electrons in a wide variety of metabolic reactions. This chain is 2Fe-2S ferredoxin (fdxB), found in Rickettsia montanensis.